Consider the following 235-residue polypeptide: Uridylate kinase (235 aa).

K8–G11 contributes to the ATP binding site. The tract at residues G16–G21 is involved in allosteric activation by GTP. Residue G50 coordinates UMP. Residues G51 and R55 each coordinate ATP. Residues D71 and T132 to T139 each bind UMP. ATP-binding residues include T159, Y165, and D168.

This sequence belongs to the UMP kinase family. In terms of assembly, homohexamer.

The protein resides in the cytoplasm. The enzyme catalyses UMP + ATP = UDP + ADP. It participates in pyrimidine metabolism; CTP biosynthesis via de novo pathway; UDP from UMP (UMPK route): step 1/1. Its activity is regulated as follows. Allosterically activated by GTP. Inhibited by UTP. Functionally, catalyzes the reversible phosphorylation of UMP to UDP. In Aliarcobacter butzleri (strain RM4018) (Arcobacter butzleri), this protein is Uridylate kinase.